The sequence spans 320 residues: Ribosomal RNA small subunit methyltransferase H (320 aa).

S-adenosyl-L-methionine-binding positions include 36 to 38 (GGH), Asp-56, Phe-82, Asp-103, and Gln-110.

The protein belongs to the methyltransferase superfamily. RsmH family.

It localises to the cytoplasm. The catalysed reaction is cytidine(1402) in 16S rRNA + S-adenosyl-L-methionine = N(4)-methylcytidine(1402) in 16S rRNA + S-adenosyl-L-homocysteine + H(+). In terms of biological role, specifically methylates the N4 position of cytidine in position 1402 (C1402) of 16S rRNA. The chain is Ribosomal RNA small subunit methyltransferase H from Chromobacterium violaceum (strain ATCC 12472 / DSM 30191 / JCM 1249 / CCUG 213 / NBRC 12614 / NCIMB 9131 / NCTC 9757 / MK).